We begin with the raw amino-acid sequence, 576 residues long: Arginine--tRNA ligase (576 aa).

A 'HIGH' region motif is present at residues proline 122–histidine 132.

This sequence belongs to the class-I aminoacyl-tRNA synthetase family. In terms of assembly, monomer.

The protein localises to the cytoplasm. The enzyme catalyses tRNA(Arg) + L-arginine + ATP = L-arginyl-tRNA(Arg) + AMP + diphosphate. The protein is Arginine--tRNA ligase of Yersinia pseudotuberculosis serotype O:1b (strain IP 31758).